Consider the following 892-residue polypeptide: Translation initiation factor IF-2 (892 aa).

Residues 165 to 175 show a composition bias toward basic and acidic residues; sequence EEQAELERQKT. Disordered regions lie at residues 165-250 and 264-300; these read EEQA…EDDS and ERAR…AHGF. Low complexity predominate over residues 208–222; it reads PRAVRPAPAARPSVS. Residues 391–560 enclose the tr-type G domain; the sequence is PRPPVVTIMG…SIQAEVLELK (170 aa). Residues 400 to 407, 446 to 450, and 500 to 503 contribute to the GTP site; these read GHVDHGKT, DTPGH, and SKID.

Belongs to the TRAFAC class translation factor GTPase superfamily. Classic translation factor GTPase family. IF-2 subfamily.

The protein localises to the cytoplasm. In terms of biological role, one of the essential components for the initiation of protein synthesis. Protects formylmethionyl-tRNA from spontaneous hydrolysis and promotes its binding to the 30S ribosomal subunits. Also involved in the hydrolysis of GTP during the formation of the 70S ribosomal complex. In Xylella fastidiosa (strain 9a5c), this protein is Translation initiation factor IF-2.